Here is a 274-residue protein sequence, read N- to C-terminus: Diaminopimelate epimerase (274 aa).

Substrate contacts are provided by Asn11 and Asn76. The Proton donor role is filled by Cys85. Substrate is bound by residues Gly86 to Asn87, Asn157, Asn189, and Glu207 to Arg208. Cys216 (proton acceptor) is an active-site residue. Gly217 to Thr218 lines the substrate pocket.

Belongs to the diaminopimelate epimerase family. Homodimer.

Its subcellular location is the cytoplasm. It catalyses the reaction (2S,6S)-2,6-diaminopimelate = meso-2,6-diaminopimelate. It participates in amino-acid biosynthesis; L-lysine biosynthesis via DAP pathway; DL-2,6-diaminopimelate from LL-2,6-diaminopimelate: step 1/1. Catalyzes the stereoinversion of LL-2,6-diaminopimelate (L,L-DAP) to meso-diaminopimelate (meso-DAP), a precursor of L-lysine and an essential component of the bacterial peptidoglycan. The chain is Diaminopimelate epimerase from Thermobifida fusca (strain YX).